Consider the following 409-residue polypeptide: Peptide chain release factor subunit 1 (409 aa).

It belongs to the eukaryotic release factor 1 family. In terms of assembly, heterodimer of two subunits, one of which binds GTP.

The protein resides in the cytoplasm. Directs the termination of nascent peptide synthesis (translation) in response to the termination codons UAA, UAG and UGA. The chain is Peptide chain release factor subunit 1 from Methanopyrus kandleri (strain AV19 / DSM 6324 / JCM 9639 / NBRC 100938).